Consider the following 489-residue polypeptide: Rhamnulokinase (489 aa).

13–17 (ASSGR) is a binding site for ATP. Cysteine 68 and cysteine 222 are disulfide-bonded. Substrate contacts are provided by residues glycine 83 and 236 to 238 (HDT). Aspartate 237 serves as the catalytic Proton acceptor. Threonine 259 is an ATP binding site. Residue asparagine 296 coordinates substrate. ATP is bound at residue glutamine 304. Cysteine 353 and cysteine 370 form a disulfide bridge. Glycine 402 contacts ATP. A disulfide bond links cysteine 413 and cysteine 417.

It belongs to the rhamnulokinase family. As to quaternary structure, monomer. Requires Mg(2+) as cofactor.

It carries out the reaction L-rhamnulose + ATP = L-rhamnulose 1-phosphate + ADP + H(+). It functions in the pathway carbohydrate degradation; L-rhamnose degradation; glycerone phosphate from L-rhamnose: step 2/3. In terms of biological role, involved in the catabolism of L-rhamnose (6-deoxy-L-mannose). Catalyzes the transfer of the gamma-phosphate group from ATP to the 1-hydroxyl group of L-rhamnulose to yield L-rhamnulose 1-phosphate. This chain is Rhamnulokinase, found in Escherichia coli O17:K52:H18 (strain UMN026 / ExPEC).